A 334-amino-acid polypeptide reads, in one-letter code: 7,8-didemethyl-8-hydroxy-5-deazariboflavin synthase (334 aa).

The region spanning 2–248 (VSYSKNVFVP…PDVPVQVPPN (247 aa)) is the Radical SAM core domain. Cys16, Cys20, and Cys23 together coordinate [4Fe-4S] cluster.

This sequence belongs to the radical SAM superfamily. CofG family. Consists of two subunits, CofG and CofH. [4Fe-4S] cluster serves as cofactor.

The enzyme catalyses 5-amino-5-(4-hydroxybenzyl)-6-(D-ribitylimino)-5,6-dihydrouracil + S-adenosyl-L-methionine = 7,8-didemethyl-8-hydroxy-5-deazariboflavin + 5'-deoxyadenosine + L-methionine + NH4(+) + H(+). It participates in cofactor biosynthesis; coenzyme F0 biosynthesis. Its function is as follows. Catalyzes the radical-mediated synthesis of 7,8-didemethyl-8-hydroxy-5-deazariboflavin from 5-amino-5-(4-hydroxybenzyl)-6-(D-ribitylimino)-5,6-dihydrouracil. This chain is 7,8-didemethyl-8-hydroxy-5-deazariboflavin synthase, found in Methanopyrus kandleri (strain AV19 / DSM 6324 / JCM 9639 / NBRC 100938).